The sequence spans 514 residues: Developmental and secondary metabolism regulator veA (514 aa).

The region spanning 26 to 218 is the Velvet domain; sequence NRHLWYQLTV…ADQGCHVRIR (193 aa). The Nuclear localization signal motif lies at 40-45; it reads ERARAC. Residues 219–463 are disordered; it reads RDVRMRKRDA…PIGSKRKHDQ (245 aa). Residues 228 to 243 are compositionally biased toward basic and acidic residues; the sequence is AKSNNGRDRREDDMAR. Positions 256–267 are enriched in low complexity; sequence SAAARARSMSNS. The segment covering 386 to 396 has biased composition (polar residues); it reads SYPSTPVSSHP. The PEST stretch occupies residues 411 to 448; the sequence is KSPSNSVSPSNSSLKITDLLVQPLPSSEPKLEVGSAPC. Over residues 412-423 the composition is skewed to low complexity; that stretch reads SPSNSVSPSNSS.

It belongs to the velvet family. VeA subfamily. Component of the heterotrimeric velvet complex composed of laeA, veA and velB; VeA acting as a bridging protein between laeA and velB.

It is found in the nucleus. The protein resides in the cytoplasm. Functionally, component of the velvet transcription factor complex that controls sexual/asexual developmental ratio in response to light, promoting sexual development in the darkness while stimulating asexual sporulation under illumination. The velvet complex hat acts as a global regulator for secondary metabolite gene expression. Controls the expression of the cephalosporin C gene cluster. Regulates hyphal fragmentation. The polypeptide is Developmental and secondary metabolism regulator veA (Hapsidospora chrysogenum (strain ATCC 11550 / CBS 779.69 / DSM 880 / IAM 14645 / JCM 23072 / IMI 49137) (Acremonium chrysogenum)).